The primary structure comprises 536 residues: Pentatricopeptide repeat-containing protein At2g06000 (536 aa).

PPR repeat units follow at residues 102 to 136 (SFWT…GVSP), 137 to 167 (NNRL…SFEV), 170 to 200 (CCMV…HLRF), 205 to 239 (DTKT…GCEP), 240 to 274 (DIVT…SVCS), 276 to 310 (DVVT…GIYP), 311 to 345 (TNVT…GCFP), 346 to 380 (DVVT…GMFP), 381 to 415 (NAFT…DIIP), 416 to 450 (QPFM…KCKP), 451 to 485 (DKIT…GCSP), and 486 to 523 (DKIT…NVVP).

The protein belongs to the PPR family. P subfamily.

This is Pentatricopeptide repeat-containing protein At2g06000 from Arabidopsis thaliana (Mouse-ear cress).